Reading from the N-terminus, the 153-residue chain is Arginine repressor (153 aa).

Belongs to the ArgR family.

It localises to the cytoplasm. The protein operates within amino-acid biosynthesis; L-arginine biosynthesis [regulation]. In terms of biological role, regulates arginine biosynthesis genes. This chain is Arginine repressor, found in Actinobacillus pleuropneumoniae serotype 3 (strain JL03).